The primary structure comprises 443 residues: Phosphoglucosamine mutase (443 aa).

Ser103 acts as the Phosphoserine intermediate in catalysis. Mg(2+)-binding residues include Ser103, Asp244, Asp246, and Asp248. Phosphoserine is present on Ser103.

This sequence belongs to the phosphohexose mutase family. Mg(2+) serves as cofactor. Post-translationally, activated by phosphorylation.

It carries out the reaction alpha-D-glucosamine 1-phosphate = D-glucosamine 6-phosphate. In terms of biological role, catalyzes the conversion of glucosamine-6-phosphate to glucosamine-1-phosphate. This chain is Phosphoglucosamine mutase, found in Pelagibacter ubique (strain HTCC1062).